A 555-amino-acid chain; its full sequence is Glutamate--tRNA ligase (555 aa).

The 'HIGH' region motif lies at 100-110; the sequence is PNPSGPLHIGH.

This sequence belongs to the class-I aminoacyl-tRNA synthetase family. Glutamate--tRNA ligase type 2 subfamily.

Its subcellular location is the cytoplasm. The catalysed reaction is tRNA(Glu) + L-glutamate + ATP = L-glutamyl-tRNA(Glu) + AMP + diphosphate. In terms of biological role, catalyzes the attachment of glutamate to tRNA(Glu) in a two-step reaction: glutamate is first activated by ATP to form Glu-AMP and then transferred to the acceptor end of tRNA(Glu). This is Glutamate--tRNA ligase from Methanococcus maripaludis (strain C7 / ATCC BAA-1331).